A 363-amino-acid chain; its full sequence is Putative C-&gt;U-editing enzyme APOBEC-4 (363 aa).

One can recognise a CMP/dCMP-type deaminase domain in the interval 61–177; the sequence is PQTKHLTFYE…AWNREALRSL (117 aa). His-93 contributes to the Zn(2+) binding site. Glu-95 (proton donor) is an active-site residue. Residues Cys-127 and Cys-134 each contribute to the Zn(2+) site.

It belongs to the cytidine and deoxycytidylate deaminase family. Zn(2+) serves as cofactor.

Putative C to U editing enzyme whose physiological substrate is not yet known. The chain is Putative C-&gt;U-editing enzyme APOBEC-4 (APOBEC4) from Macaca fascicularis (Crab-eating macaque).